The primary structure comprises 223 residues: Putative 3-methyladenine DNA glycosylase (223 aa).

The protein belongs to the DNA glycosylase MPG family.

This is Putative 3-methyladenine DNA glycosylase from Rhodococcus jostii (strain RHA1).